The following is a 111-amino-acid chain: Ribonuclease P protein component (111 aa).

Belongs to the RnpA family. In terms of assembly, consists of a catalytic RNA component (M1 or rnpB) and a protein subunit.

The enzyme catalyses Endonucleolytic cleavage of RNA, removing 5'-extranucleotides from tRNA precursor.. Its function is as follows. RNaseP catalyzes the removal of the 5'-leader sequence from pre-tRNA to produce the mature 5'-terminus. It can also cleave other RNA substrates such as 4.5S RNA. The protein component plays an auxiliary but essential role in vivo by binding to the 5'-leader sequence and broadening the substrate specificity of the ribozyme. The protein is Ribonuclease P protein component of Clostridium botulinum (strain Loch Maree / Type A3).